Reading from the N-terminus, the 264-residue chain is Movement protein (264 aa).

Residues F210 to P219 show a composition bias toward basic residues. Residues F210–Y264 are disordered. Residues K237 to D247 show a composition bias toward basic and acidic residues.

The protein belongs to the tobamovirus movement protein family. Binds to host RBCS at the plasmodesmata; this interaction seems required for viral systemic movement. In resistant plants, interacts with host MBP2C at host microtubules; this interaction prevents virus cell to cell movement. In resistant plants, interacts with host resistance (R) protein (e.g. tomato ToMV resistance protein TM-2(2), AC Q71BG9) at the host plasma membrane; this interaction triggers host defense responses leading to programmed cell death.

The protein localises to the host cytoplasm. It localises to the host cytoskeleton. It is found in the host cell junction. The protein resides in the host plasmodesma. Transports viral genome to neighboring plant cells directly through plasmosdesmata, without any budding. The movement protein allows efficient cell to cell propagation, by bypassing the host cell wall barrier. Forms a ribonucleoprotein complex with viral RNA. Binds microtubules and modulates microtubule stability. Can bind double-stranded DNA. Triggers host hypersensitive defense reaction in incompatible plants harboring resistance (R) proteins. In Tomato mosaic virus (strain LII) (ToMV), this protein is Movement protein (MP).